The following is a 189-amino-acid chain: Large ribosomal subunit protein eL19A (189 aa).

Residue Lys-21 forms a Glycyl lysine isopeptide (Lys-Gly) (interchain with G-Cter in ubiquitin) linkage. 2 positions are modified to phosphoserine: Ser-30 and Ser-37. Residues Lys-53 and Lys-60 each participate in a glycyl lysine isopeptide (Lys-Gly) (interchain with G-Cter in ubiquitin) cross-link. The tract at residues 58–85 is disordered; the sequence is HSKSRTRAHAQSKREGRHSGYGKRKGTR. Residues 59–68 show a composition bias toward basic residues; sequence SKSRTRAHAQ. A Phosphoserine modification is found at Ser-91. Residues Lys-146 and Lys-186 each participate in a glycyl lysine isopeptide (Lys-Gly) (interchain with G-Cter in ubiquitin) cross-link. Residues 164–189 form a disordered region; sequence LKNRAARDRRAQRVAEKRDALLKEDA.

This sequence belongs to the eukaryotic ribosomal protein eL19 family. In terms of assembly, component of the large ribosomal subunit (LSU). Mature yeast ribosomes consist of a small (40S) and a large (60S) subunit. The 40S small subunit contains 1 molecule of ribosomal RNA (18S rRNA) and 33 different proteins (encoded by 57 genes). The large 60S subunit contains 3 rRNA molecules (25S, 5.8S and 5S rRNA) and 46 different proteins (encoded by 81 genes). eL19 lies in close proximity to the binding site for eukaryotic initiation factor eIF4G.

It localises to the cytoplasm. Its function is as follows. Component of the ribosome, a large ribonucleoprotein complex responsible for the synthesis of proteins in the cell. The small ribosomal subunit (SSU) binds messenger RNAs (mRNAs) and translates the encoded message by selecting cognate aminoacyl-transfer RNA (tRNA) molecules. The large subunit (LSU) contains the ribosomal catalytic site termed the peptidyl transferase center (PTC), which catalyzes the formation of peptide bonds, thereby polymerizing the amino acids delivered by tRNAs into a polypeptide chain. The nascent polypeptides leave the ribosome through a tunnel in the LSU and interact with protein factors that function in enzymatic processing, targeting, and the membrane insertion of nascent chains at the exit of the ribosomal tunnel. eL19 may play a role in the last stages of translation initiation, in particular subunit joining and shedding/releasing factors. The protein is Large ribosomal subunit protein eL19A of Saccharomyces cerevisiae (strain ATCC 204508 / S288c) (Baker's yeast).